The sequence spans 104 residues: MIVTTTPSVEGRQIAEYLGIVSAEAIMGANFFRDLAASITDLIGGRAGSYESKLREGREECLRELVAEAARLGADAVVGVDIDYEVVGESMLMVTASGTAVRLR.

It belongs to the UPF0145 family.

This Symbiobacterium thermophilum (strain DSM 24528 / JCM 14929 / IAM 14863 / T) protein is UPF0145 protein STH1265.